The chain runs to 184 residues: Protein Syd (184 aa).

This sequence belongs to the Syd family.

It localises to the cell inner membrane. In terms of biological role, interacts with the SecY protein in vivo. May bind preferentially to an uncomplexed state of SecY, thus functioning either as a chelating agent for excess SecY in the cell or as a regulatory factor that negatively controls the translocase function. The sequence is that of Protein Syd from Photobacterium profundum (strain SS9).